Reading from the N-terminus, the 242-residue chain is MSFYDDQSGNLSPQRKLGRGKIEIKRIENTTNRQVTFCKRRNGLLKKAYELSVLCDAEVALIVFSTRGRLYEYANNSVKGTIERYKKACTDSPNTSSVSEANAQFYQQEASKLRQEISSIQKNNRNMMGESLGSLTVRDLKGLETKLEKGISRIRSKKNELLFAEIEYMQKKEIDLHNNNQYLRAKIAENERAQQHMNLMPGSSDYELAPPQSFDGRNYIQLNGLQPNNHYSRQDQTALQLV.

The MADS-box domain occupies 19 to 73 (RGKIEIKRIENTTNRQVTFCKRRNGLLKKAYELSVLCDAEVALIVFSTRGRLYEY). One can recognise a K-box domain in the interval 103–193 (AQFYQQEASK…RAKIAENERA (91 aa)).

Flower. Preferentially expressed in stamen and carpel and weakly in petal. Undetected in leaves and roots.

Its subcellular location is the nucleus. Probable transcription factor involved in regulating genes that determines stamen and carpel development in wild-type flowers. The sequence is that of Floral homeotic protein AGAMOUS (AG2) from Panax ginseng (Korean ginseng).